Reading from the N-terminus, the 205-residue chain is Imidazole glycerol phosphate synthase subunit HisH (205 aa).

Residues 6–205 enclose the Glutamine amidotransferase type-1 domain; that stretch reads RVGIIDHGSG…LLTRWLNQLS (200 aa). Cys-84 acts as the Nucleophile in catalysis. Active-site residues include His-185 and Glu-187.

In terms of assembly, heterodimer of HisH and HisF.

The protein resides in the cytoplasm. The enzyme catalyses 5-[(5-phospho-1-deoxy-D-ribulos-1-ylimino)methylamino]-1-(5-phospho-beta-D-ribosyl)imidazole-4-carboxamide + L-glutamine = D-erythro-1-(imidazol-4-yl)glycerol 3-phosphate + 5-amino-1-(5-phospho-beta-D-ribosyl)imidazole-4-carboxamide + L-glutamate + H(+). The catalysed reaction is L-glutamine + H2O = L-glutamate + NH4(+). It participates in amino-acid biosynthesis; L-histidine biosynthesis; L-histidine from 5-phospho-alpha-D-ribose 1-diphosphate: step 5/9. In terms of biological role, IGPS catalyzes the conversion of PRFAR and glutamine to IGP, AICAR and glutamate. The HisH subunit catalyzes the hydrolysis of glutamine to glutamate and ammonia as part of the synthesis of IGP and AICAR. The resulting ammonia molecule is channeled to the active site of HisF. The sequence is that of Imidazole glycerol phosphate synthase subunit HisH from Cutibacterium acnes (strain DSM 16379 / KPA171202) (Propionibacterium acnes).